We begin with the raw amino-acid sequence, 320 residues long: Tyrosine recombinase XerC (320 aa).

In terms of domain architecture, Core-binding (CB) spans 14 to 104 (ADVREAVASW…SLRSFARHLE (91 aa)). The Tyr recombinase domain maps to 125–311 (RLPRPLPVAA…DSARLMSAFE (187 aa)). Residues Arg-170, Lys-195, His-263, Arg-266, and His-289 contribute to the active site. Tyr-298 (O-(3'-phospho-DNA)-tyrosine intermediate) is an active-site residue.

Belongs to the 'phage' integrase family. XerC subfamily. In terms of assembly, forms a cyclic heterotetrameric complex composed of two molecules of XerC and two molecules of XerD.

Its subcellular location is the cytoplasm. Site-specific tyrosine recombinase, which acts by catalyzing the cutting and rejoining of the recombining DNA molecules. The XerC-XerD complex is essential to convert dimers of the bacterial chromosome into monomers to permit their segregation at cell division. It also contributes to the segregational stability of plasmids. In Methylobacterium sp. (strain 4-46), this protein is Tyrosine recombinase XerC.